Reading from the N-terminus, the 261-residue chain is Non-homologous end joining protein Ku 1 (261 aa).

Positions 12–171 (SFSLVAIPVQ…LITLHYSDEV (160 aa)) constitute a Ku domain.

It belongs to the prokaryotic Ku family. As to quaternary structure, homodimer. Interacts with LigD.

In terms of biological role, with LigD forms a non-homologous end joining (NHEJ) DNA repair enzyme, which repairs dsDNA breaks with reduced fidelity. Binds linear dsDNA with 5'- and 3'- overhangs but not closed circular dsDNA nor ssDNA. Recruits and stimulates the ligase activity of LigD. The sequence is that of Non-homologous end joining protein Ku 1 from Geotalea uraniireducens (strain Rf4) (Geobacter uraniireducens).